Here is an 801-residue protein sequence, read N- to C-terminus: MKISEQWLRQWVNPNNSSEQLADQLTMAGLEIDDRFAVARAFSGVVVGEVISVEQHPDADKLRVTQVNIGAVEPLQIVCGAPNVTVGMKVPVATVGAVLPSDDGTGFKIKNGNLRGVDSNGMLCGASEIDLTDNIDGLLELPTDAPIGTDIREYLGLDNQILDISITPNRGDCFSVRGIAREISVINDLPLQMPNIPDNNQVIHNEAMPAVTVSAVEACPRYFLQSISNIDRTIDTPKWMQDALVQSGLRSHNFLVDVTNYVLMELGQPLHAFDADTIVGDIVVRLAQPEETITLLNEQTISLTGDELVIADDKGALALAGIMGGQRSSVTDSTTNIVLESAFFNPLAIAARARRFGLHTDASQRFERGVDFELPALALARAVDLITSVTGSQAGQIVAMENSDHLPARAPITLPITKVRDVIGIEIEPVVMVRILTQLGFKVEQQADSLICTPPSYRFDMSIKEDLIEEIARIYGYDNIPSILPHLQVSMDYDDTADLTHEMKLALVDNGYMEAISFSFSDAKLEALLDDKALGEVLALANPISSDLAVMRRTLLSSLLPCVQYNLNRQQSRVRFFETGLSFVGHSVSDLVQTPSIAIVAVGDVWDEQAYQNRALDFYDLKHDIEQLLPAKIDNARIRYERSQLAFLHPGQSAKLYIDDQYVGWLGQLHPNTAKQLDLTTTWVAQLSLAPLLTLAREQHAITTPSKFPQVRRDIAILVDSDISLQTLESTIRKASGTLLTDLWLFDVYQGEKVPAGQRSLAFALIWQDKTQTLSDDAVKTATDKVVQALTVEHSAQLRDS.

Positions 39-152 (ARAFSGVVVG…TDAPIGTDIR (114 aa)) constitute a tRNA-binding domain. The 76-residue stretch at 407 to 482 (PARAPITLPI…RIYGYDNIPS (76 aa)) folds into the B5 domain. Mg(2+)-binding residues include Asp-460, Asp-466, Glu-469, and Glu-470. One can recognise an FDX-ACB domain in the interval 706-799 (SKFPQVRRDI…LTVEHSAQLR (94 aa)).

This sequence belongs to the phenylalanyl-tRNA synthetase beta subunit family. Type 1 subfamily. Tetramer of two alpha and two beta subunits. Mg(2+) serves as cofactor.

It localises to the cytoplasm. It catalyses the reaction tRNA(Phe) + L-phenylalanine + ATP = L-phenylalanyl-tRNA(Phe) + AMP + diphosphate + H(+). The sequence is that of Phenylalanine--tRNA ligase beta subunit from Psychrobacter arcticus (strain DSM 17307 / VKM B-2377 / 273-4).